We begin with the raw amino-acid sequence, 78 residues long: Exodeoxyribonuclease 7 small subunit (78 aa).

This sequence belongs to the XseB family. In terms of assembly, heterooligomer composed of large and small subunits.

The protein localises to the cytoplasm. The enzyme catalyses Exonucleolytic cleavage in either 5'- to 3'- or 3'- to 5'-direction to yield nucleoside 5'-phosphates.. In terms of biological role, bidirectionally degrades single-stranded DNA into large acid-insoluble oligonucleotides, which are then degraded further into small acid-soluble oligonucleotides. This chain is Exodeoxyribonuclease 7 small subunit, found in Paracoccus zeaxanthinifaciens.